Consider the following 695-residue polypeptide: Solute carrier family 53 member 1 (695 aa).

Residues 1–228 lie on the Cytoplasmic side of the membrane; sequence MKFAEHLSAH…RVPPLGAAQP (228 aa). Residues 2-224 form the SPX domain; sequence KFAEHLSAHI…MKRLRVPPLG (223 aa). The interval 158-165 is important for inositol polyphosphate binding; that stretch reads KILKKHDK. Residues 229–259 traverse the membrane as a helical segment; the sequence is APAWTTFRVGLFCGIFIVLNITLVFAAVFKL. The Extracellular segment spans residues 260–264; that stretch reads ETDRT. Residues 265–296 form a helical membrane-spanning segment; sequence VWPLIRIYRGGFLLIEFLFLLGINTYGWRQAG. Residues 297–309 are Cytoplasmic-facing; the sequence is VNHVLIFELNPRN. A helical membrane pass occupies residues 310 to 337; it reads NLSHQHLFEIAGFLGILWCLSLLACFFA. Residues 338-343 lie on the Extracellular side of the membrane; the sequence is PISIIP. A helical membrane pass occupies residues 344–365; sequence IYVYPLALYGFMVFFLINPTKT. The segment at residues 366-383 is an intramembrane region (helical); it reads FYYKSRFWLLKLLFRVFT. Over 384-388 the chain is Cytoplasmic; the sequence is APFHK. Residues 389–422 form a discontinuously helical membrane-spanning segment; it reads VGFADFWLADQLNSLSVILMDLEYMICFYSFELK. Residues Asp-398 and Asn-401 each coordinate phosphate. Over 423 to 429 the chain is Extracellular; it reads WDESKGL. Residues 430–471 form a discontinuously helical membrane-spanning segment; that stretch reads LPNDPQEPEFCHKYSYGVRAIVQCIPAWLRFIQCLRRYRDTR. An EXS domain is found at 439–642; sequence FCHKYSYGVR…LNADDQTLLE (204 aa). Residue Arg-472 is a topological domain, cytoplasmic. The helical transmembrane segment at 473–503 threads the bilayer; the sequence is AFPHLVNAGKYSTTFFTVTFAALYSTHEEQN. Phosphate is bound by residues Lys-482 and Tyr-483. The Extracellular portion of the chain corresponds to 504–506; that stretch reads HSD. The chain crosses the membrane as a helical span at residues 507–534; that stretch reads TVVFFYLWVFFCIISSCYTLIWDLKMDW. Residues 535–553 lie on the Cytoplasmic side of the membrane; that stretch reads GLFDKNAGENTFLREEIVY. Residues 554-584 form a discontinuously helical membrane-spanning segment; it reads PQKAYYYCAIIEDVILRFAWTIQISITATFK. Arg-570 is a binding site for phosphate. Residues 585–586 are Extracellular-facing; sequence PH. A helical transmembrane segment spans residues 587–625; it reads VGNIIATVFAPLEVFRRFVWNFFRLENEHLNNCGEFRAV. The phosphate site is built by Arg-602 and Arg-603. Topologically, residues 626-695 are cytoplasmic; the sequence is RDISVAPLNA…IEDTDDEANT (70 aa). Ser-667 is subject to Phosphoserine. Positions 671-695 are disordered; sequence PRLASQSKARDTKVLIEDTDDEANT. Thr-689 is modified (phosphothreonine).

Belongs to the SYG1 (TC 2.A.94) family. Homodimer. In terms of tissue distribution, expressed in pancreatic islets.

The protein localises to the cell membrane. It catalyses the reaction phosphate(in) = phosphate(out). In terms of biological role, inorganic ion transporter that mediates phosphate ion export across plasma membrane. Plays a major role in phosphate homeostasis, preventing intracellular phosphate accumulation and possible calcium phosphate precipitation, ultimately preserving calcium signaling. Binds inositol hexakisphosphate (Ins6P) and similar inositol polyphosphates, such as 5-diphospho-inositol pentakisphosphate (5-InsP7), which are important intracellular signaling molecules involved in regulation of phosphate flux. (Microbial infection) Receptor for xenotropic and polytropic murine leukemia (X- and P-MLV) retroviruses. Confers susceptibility to X- or P-MLV infection in vitro. The sequence is that of Solute carrier family 53 member 1 from Mus musculus (Mouse).